Reading from the N-terminus, the 954-residue chain is Patched domain-containing protein 3 (954 aa).

The segment covering M1 to K20 has biased composition (basic and acidic residues). Residues M1–E103 are disordered. Residues Q42–S57 are compositionally biased toward pro residues. Over residues E90–P102 the composition is skewed to acidic residues. A helical membrane pass occupies residues W139 to L159. N-linked (GlcNAc...) asparagine glycosylation is found at N192, N275, and N279. 7 helical membrane passes run L297 to L317, V383 to F403, F423 to I443, S447 to H467, A486 to M506, G520 to L540, and Y603 to V623. Residues V383 to L540 form the SSD domain. N-linked (GlcNAc...) asparagine glycans are attached at residues N678, N692, and N737. 5 consecutive transmembrane segments (helical) span residues V804 to C824, L826 to W846, L858 to S878, L894 to A914, and I927 to L947.

The protein belongs to the patched family. In terms of tissue distribution, expressed in germ cells of the testis (at protein level). Detected in blood lymph, colon, small intestine, ovary, testis, prostate, thymus and spleen with highest levels in testis.

It localises to the cell projection. It is found in the cilium. Its subcellular location is the flagellum membrane. The protein resides in the endoplasmic reticulum membrane. Its function is as follows. May play a role in sperm development or sperm function. However, does not appear to have an essential role in spermatogenesis or male fertility. The protein is Patched domain-containing protein 3 (PTCHD3) of Homo sapiens (Human).